A 298-amino-acid polypeptide reads, in one-letter code: (S)-ureidoglycine aminohydrolase (298 aa).

The first 20 residues, 1-20 (MRSLYLIVFIVISLVKASKS), serve as a signal peptide directing secretion. One can recognise a Cupin type-2 domain in the interval 222–288 (TMDFQPGEFL…ALGKTRSRYL (67 aa)). Residues Glu235, His237, His241, and Gln275 each contribute to the Mn(2+) site. Substrate is bound at residue Glu235. Gln275, Tyr287, and Lys291 together coordinate substrate.

This sequence belongs to the UGHY family. Homooctamer. It depends on Mn(2+) as a cofactor.

The protein localises to the endoplasmic reticulum. It catalyses the reaction (S)-2-ureidoglycine + H2O = (S)-ureidoglycolate + NH4(+). Its function is as follows. Involved in the catabolism of purine nucleotides. Can use (S)-2-ureidoglycine as substrate, but not allantoate. The sequential activity of AAH, UGLYAH and UAH allows a complete purine breakdown without the intermediate generation of urea. The protein is (S)-ureidoglycine aminohydrolase (UGLYAH) of Arabidopsis thaliana (Mouse-ear cress).